Consider the following 283-residue polypeptide: Bis(5'-nucleosyl)-tetraphosphatase, symmetrical (283 aa).

Belongs to the Ap4A hydrolase family.

The enzyme catalyses P(1),P(4)-bis(5'-adenosyl) tetraphosphate + H2O = 2 ADP + 2 H(+). Hydrolyzes diadenosine 5',5'''-P1,P4-tetraphosphate to yield ADP. The sequence is that of Bis(5'-nucleosyl)-tetraphosphatase, symmetrical from Serratia proteamaculans (strain 568).